A 255-amino-acid chain; its full sequence is Alkaline ceramidase (255 aa).

Residues 1-28 (MADGISSFWGPVTSTIECCEMNYAYSSY) are Lumenal-facing. A helical transmembrane segment spans residues 29–49 (IAEFYNTISNVPGILLALIGL). The Cytoplasmic portion of the chain corresponds to 50-60 (VNALRQRFEKR). A helical membrane pass occupies residues 61–81 (FSILHISNMILAIGSMLYHAT). H79 contributes to the Zn(2+) binding site. Over 82 to 91 (LQHVQQQSDE) the chain is Lumenal. A helical transmembrane segment spans residues 92–112 (TPMVWEILLYMYILYSPDWHY). Topologically, residues 113 to 118 (RSTMPT) are cytoplasmic. 2 helical membrane-spanning segments follow: residues 119–139 (FLFLYGAAFAIVHAYLRFGIG) and 140–160 (FKVHYVILCLLCIPRMYKYYI). The Cytoplasmic segment spans residues 161 to 169 (HTEDTAAKR). Residues 170–192 (IAKWYVATILVGSICWFCDRVFC) form a helical membrane-spanning segment. The Lumenal segment spans residues 193-205 (KTISQWPVNPQGH). 2 residues coordinate Zn(2+): H205 and H209. A helical membrane pass occupies residues 206–226 (ALWHVFMSFNSYCANTFLMFC). The Cytoplasmic portion of the chain corresponds to 227-255 (RAQQRGWNPKVKYFLGVLPYVKIEKPKTQ).

The protein belongs to the alkaline ceramidase family. The cofactor is Zn(2+). As to expression, mostly expressed in roots, shoot meristems and pollen, and, to a lower extent, in mature leaves.

The protein resides in the endoplasmic reticulum membrane. It is found in the golgi apparatus membrane. Hydrolyzes only phytoceramide into phytosphingosine and free fatty acid. Does not have reverse activity. Affects plant morphogenesis. Required for the formation of wax layer that ensure cuticle permeability. Implicated in abscisic acid (ABA)-mediated stomatal closure. Involved in both biotic and abiotic stresses. Promotes salt resistance and defenses responses toward pathogenic bacteria (e.g. P.syringae) and against the fungal toxin fumonisin B1 (FB1). This is Alkaline ceramidase from Arabidopsis thaliana (Mouse-ear cress).